The chain runs to 516 residues: Probable 2-isopropylmalate synthase (516 aa).

The Pyruvate carboxyltransferase domain occupies 20–271 (VTVFDTTLRD…KTNIRTEYLV (252 aa)).

This sequence belongs to the alpha-IPM synthase/homocitrate synthase family.

The catalysed reaction is 3-methyl-2-oxobutanoate + acetyl-CoA + H2O = (2S)-2-isopropylmalate + CoA + H(+). The protein operates within amino-acid biosynthesis; L-leucine biosynthesis; L-leucine from 3-methyl-2-oxobutanoate: step 1/4. Catalyzes the condensation of the acetyl group of acetyl-CoA with 3-methyl-2-oxobutanoate (2-oxoisovalerate) to form 3-carboxy-3-hydroxy-4-methylpentanoate (2-isopropylmalate). The chain is Probable 2-isopropylmalate synthase (leuA) from Methanosarcina mazei (strain ATCC BAA-159 / DSM 3647 / Goe1 / Go1 / JCM 11833 / OCM 88) (Methanosarcina frisia).